We begin with the raw amino-acid sequence, 217 residues long: Transmembrane emp24 domain-containing protein p24delta6 (217 aa).

The first 26 residues, Met1 to Ala26, serve as a signal peptide directing secretion. Residues Ile27–Asn186 are Lumenal-facing. The GOLD domain occupies Glu36–Arg152. N-linked (GlcNAc...) asparagine glycosylation is found at Asn84 and Asn116. A coiled-coil region spans residues Ala138–Ile160. Omega-N-methylated arginine is present on residues Arg170 and Arg175. The chain crosses the membrane as a helical span at residues Gln187–Leu207. At Lys208–Ile217 the chain is on the cytoplasmic side. A COPII vesicle coat-binding motif is present at residues Tyr210–Phe211. Residues Tyr210–Ile217 carry the COPI vesicle coat-binding motif.

Belongs to the EMP24/GP25L family. As to quaternary structure, probably oligomerizes with other members of the EMP24/GP25L family. Associates with the COPI vesicle coat (coatomer). Associates with the COPII vesicle coat (coatomer).

Its subcellular location is the endoplasmic reticulum membrane. Involved in vesicular protein trafficking. Mainly functions in the early secretory pathway. Thought to act as cargo receptor at the lumenal side for incorporation of secretory cargo molecules into transport vesicles and to be involved in vesicle coat formation at the cytoplasmic side. This Arabidopsis thaliana (Mouse-ear cress) protein is Transmembrane emp24 domain-containing protein p24delta6.